Consider the following 293-residue polypeptide: Ribosomal RNA small subunit methyltransferase A (293 aa).

Residues Asn36, Leu38, Gly63, Glu84, Asp111, and Asn132 each coordinate S-adenosyl-L-methionine.

It belongs to the class I-like SAM-binding methyltransferase superfamily. rRNA adenine N(6)-methyltransferase family. RsmA subfamily.

The protein resides in the cytoplasm. It catalyses the reaction adenosine(1518)/adenosine(1519) in 16S rRNA + 4 S-adenosyl-L-methionine = N(6)-dimethyladenosine(1518)/N(6)-dimethyladenosine(1519) in 16S rRNA + 4 S-adenosyl-L-homocysteine + 4 H(+). Specifically dimethylates two adjacent adenosines (A1518 and A1519) in the loop of a conserved hairpin near the 3'-end of 16S rRNA in the 30S particle. May play a critical role in biogenesis of 30S subunits. The protein is Ribosomal RNA small subunit methyltransferase A of Treponema denticola (strain ATCC 35405 / DSM 14222 / CIP 103919 / JCM 8153 / KCTC 15104).